The sequence spans 483 residues: Probable cytosol aminopeptidase (483 aa).

Positions 245 and 250 each coordinate Mn(2+). Residue K257 is part of the active site. Residues D268, D327, and E329 each coordinate Mn(2+). Residue R331 is part of the active site.

It belongs to the peptidase M17 family. Requires Mn(2+) as cofactor.

The protein localises to the cytoplasm. The catalysed reaction is Release of an N-terminal amino acid, Xaa-|-Yaa-, in which Xaa is preferably Leu, but may be other amino acids including Pro although not Arg or Lys, and Yaa may be Pro. Amino acid amides and methyl esters are also readily hydrolyzed, but rates on arylamides are exceedingly low.. It carries out the reaction Release of an N-terminal amino acid, preferentially leucine, but not glutamic or aspartic acids.. Functionally, presumably involved in the processing and regular turnover of intracellular proteins. Catalyzes the removal of unsubstituted N-terminal amino acids from various peptides. In Wolinella succinogenes (strain ATCC 29543 / DSM 1740 / CCUG 13145 / JCM 31913 / LMG 7466 / NCTC 11488 / FDC 602W) (Vibrio succinogenes), this protein is Probable cytosol aminopeptidase.